The following is a 243-amino-acid chain: Probable transcriptional regulatory protein Smal_3128 (243 aa).

The protein belongs to the TACO1 family.

It localises to the cytoplasm. This is Probable transcriptional regulatory protein Smal_3128 from Stenotrophomonas maltophilia (strain R551-3).